We begin with the raw amino-acid sequence, 113 residues long: MMKCPQALLAIFWLLLSWVSSEDKVVQSPLSLVVHEGDTVTLNCSYEVTNFRSLLWYKQEKKAPTFLFMLTSSGIEKKSGRLSSILDKKELFSILNITATQTGDSAIYLCAVE.

A signal peptide spans 1–21 (MMKCPQALLAIFWLLLSWVSS). One can recognise an Ig-like domain in the interval 23–113 (DKVVQSPLSL…DSAIYLCAVE (91 aa)). 2 N-linked (GlcNAc...) asparagine glycosylation sites follow: Asn43 and Asn96. A disulfide bridge connects residues Cys44 and Cys110.

In terms of assembly, alpha-beta TR is a heterodimer composed of an alpha and beta chain; disulfide-linked. The alpha-beta TR is associated with the transmembrane signaling CD3 coreceptor proteins to form the TR-CD3 (TcR or TCR). The assembly of alpha-beta TR heterodimers with CD3 occurs in the endoplasmic reticulum where a single alpha-beta TR heterodimer associates with one CD3D-CD3E heterodimer, one CD3G-CD3E heterodimer and one CD247 homodimer forming a stable octameric structure. CD3D-CD3E and CD3G-CD3E heterodimers preferentially associate with TR alpha and TR beta chains, respectively. The association of the CD247 homodimer is the last step of TcR assembly in the endoplasmic reticulum and is required for transport to the cell surface.

It is found in the cell membrane. Functionally, v region of the variable domain of T cell receptor (TR) alpha chain that participates in the antigen recognition. Alpha-beta T cell receptors are antigen specific receptors which are essential to the immune response and are present on the cell surface of T lymphocytes. Recognize peptide-major histocompatibility (MH) (pMH) complexes that are displayed by antigen presenting cells (APC), a prerequisite for efficient T cell adaptive immunity against pathogens. Binding of alpha-beta TR to pMH complex initiates TR-CD3 clustering on the cell surface and intracellular activation of LCK that phosphorylates the ITAM motifs of CD3G, CD3D, CD3E and CD247 enabling the recruitment of ZAP70. In turn ZAP70 phosphorylates LAT, which recruits numerous signaling molecules to form the LAT signalosome. The LAT signalosome propagates signal branching to three major signaling pathways, the calcium, the mitogen-activated protein kinase (MAPK) kinase and the nuclear factor NF-kappa-B (NF-kB) pathways, leading to the mobilization of transcription factors that are critical for gene expression and essential for T cell growth and differentiation. The T cell repertoire is generated in the thymus, by V-(D)-J rearrangement. This repertoire is then shaped by intrathymic selection events to generate a peripheral T cell pool of self-MH restricted, non-autoaggressive T cells. Post-thymic interaction of alpha-beta TR with the pMH complexes shapes TR structural and functional avidity. This Homo sapiens (Human) protein is T cell receptor alpha variable 36/delta variable 7.